A 58-amino-acid polypeptide reads, in one-letter code: Temporin-1Th (58 aa).

An N-terminal signal peptide occupies residues 1–22 (MFTLKKSLLLLFFLGTINLSLC). A propeptide spanning residues 23-46 (EEERNAEEERRDEPDERDVQVEKR) is cleaved from the precursor. The disordered stretch occupies residues 25–46 (ERNAEEERRDEPDERDVQVEKR). Leucine 56 carries the post-translational modification Leucine amide.

In terms of tissue distribution, expressed by the skin glands.

The protein localises to the secreted. Its function is as follows. Antimicrobial peptide that renders both the outer and inner membrane of bacteria permeable to hydrophobic substances of low molecular mass. In Rana temporaria (European common frog), this protein is Temporin-1Th.